The chain runs to 33 residues: Dermaseptin-H9 (33 aa).

Leucine amide is present on leucine 33.

This sequence belongs to the frog skin active peptide (FSAP) family. Dermaseptin subfamily. As to expression, expressed by the skin glands.

It localises to the secreted. Has antimicrobial activity. The sequence is that of Dermaseptin-H9 from Pithecopus hypochondrialis (Orange-legged leaf frog).